A 208-amino-acid chain; its full sequence is CD209 antigen-like protein E (208 aa).

Residues 1–16 (MRAPQMGSLGFLDKGH) are Cytoplasmic-facing. The helical; Signal-anchor for type II membrane protein transmembrane segment at 17–37 (IPLVLQLLFLILFTGLLVAII) threads the bilayer. Topologically, residues 38–208 (IQVSKMPSSE…KIATTCLSKW (171 aa)) are extracellular. Disulfide bonds link cysteine 77/cysteine 88, cysteine 105/cysteine 197, and cysteine 176/cysteine 189. Residues 83-198 (FFNGNCYFFS…CEQRKFWICK (116 aa)) enclose the C-type lectin domain.

The protein localises to the membrane. Its function is as follows. Putative pathogen-recognition receptor. May mediate the endocytosis of pathogens which are subsequently degraded in lysosomal compartments. The sequence is that of CD209 antigen-like protein E (Cd209e) from Mus musculus (Mouse).